The primary structure comprises 101 residues: NAD(P)H-quinone oxidoreductase subunit 4L, chloroplastic (101 aa).

3 consecutive transmembrane segments (helical) span residues M2–I22, M32–F52, and I61–V81.

It belongs to the complex I subunit 4L family. As to quaternary structure, NDH is composed of at least 16 different subunits, 5 of which are encoded in the nucleus.

It localises to the plastid. It is found in the chloroplast thylakoid membrane. It catalyses the reaction a plastoquinone + NADH + (n+1) H(+)(in) = a plastoquinol + NAD(+) + n H(+)(out). It carries out the reaction a plastoquinone + NADPH + (n+1) H(+)(in) = a plastoquinol + NADP(+) + n H(+)(out). In terms of biological role, NDH shuttles electrons from NAD(P)H:plastoquinone, via FMN and iron-sulfur (Fe-S) centers, to quinones in the photosynthetic chain and possibly in a chloroplast respiratory chain. The immediate electron acceptor for the enzyme in this species is believed to be plastoquinone. Couples the redox reaction to proton translocation, and thus conserves the redox energy in a proton gradient. The polypeptide is NAD(P)H-quinone oxidoreductase subunit 4L, chloroplastic (Vitis vinifera (Grape)).